Consider the following 126-residue polypeptide: Large ribosomal subunit protein bL17 (126 aa).

It belongs to the bacterial ribosomal protein bL17 family. As to quaternary structure, part of the 50S ribosomal subunit. Contacts protein L32.

This chain is Large ribosomal subunit protein bL17, found in Laribacter hongkongensis (strain HLHK9).